Consider the following 971-residue polypeptide: Exportin-2 (971 aa).

In terms of domain architecture, Importin N-terminal spans Ala29–Ser102.

It belongs to the XPO2/CSE1 family. Interacts with cftr.

The protein localises to the cytoplasm. It is found in the nucleus. Functionally, export receptor for importin alpha. Mediates importin-alpha re-export from the nucleus to the cytoplasm after import substrates have been released into the nucleoplasm. Negatively regulates fluid secretion and plays a role in fluid homeostasis by down-regulating cftr activity. The sequence is that of Exportin-2 (cse1l) from Oreochromis niloticus (Nile tilapia).